The following is a 257-amino-acid chain: 5'-nucleotidase SurE (257 aa).

The a divalent metal cation site is built by Asp-9, Asp-10, Ser-40, and Asn-93.

The protein belongs to the SurE nucleotidase family. Requires a divalent metal cation as cofactor.

Its subcellular location is the cytoplasm. The enzyme catalyses a ribonucleoside 5'-phosphate + H2O = a ribonucleoside + phosphate. In terms of biological role, nucleotidase that shows phosphatase activity on nucleoside 5'-monophosphates. The protein is 5'-nucleotidase SurE of Campylobacter hominis (strain ATCC BAA-381 / DSM 21671 / CCUG 45161 / LMG 19568 / NCTC 13146 / CH001A).